The primary structure comprises 143 residues: Putative aryl-alcohol dehydrogenase AAD15 (143 aa).

Belongs to the aldo/keto reductase family. Aldo/keto reductase 2 subfamily.

Putative aryl-alcohol dehydrogenase. In Saccharomyces cerevisiae (strain ATCC 204508 / S288c) (Baker's yeast), this protein is Putative aryl-alcohol dehydrogenase AAD15 (AAD15).